Here is a 271-residue protein sequence, read N- to C-terminus: Putative pyruvate, phosphate dikinase regulatory protein (271 aa).

Glycine 153 to threonine 160 contacts ADP.

This sequence belongs to the pyruvate, phosphate/water dikinase regulatory protein family. PDRP subfamily.

It catalyses the reaction N(tele)-phospho-L-histidyl/L-threonyl-[pyruvate, phosphate dikinase] + ADP = N(tele)-phospho-L-histidyl/O-phospho-L-threonyl-[pyruvate, phosphate dikinase] + AMP + H(+). The catalysed reaction is N(tele)-phospho-L-histidyl/O-phospho-L-threonyl-[pyruvate, phosphate dikinase] + phosphate + H(+) = N(tele)-phospho-L-histidyl/L-threonyl-[pyruvate, phosphate dikinase] + diphosphate. In terms of biological role, bifunctional serine/threonine kinase and phosphorylase involved in the regulation of the pyruvate, phosphate dikinase (PPDK) by catalyzing its phosphorylation/dephosphorylation. The protein is Putative pyruvate, phosphate dikinase regulatory protein of Shouchella clausii (strain KSM-K16) (Alkalihalobacillus clausii).